Here is a 220-residue protein sequence, read N- to C-terminus: Mediator of RNA polymerase II transcription subunit 7 (220 aa).

It belongs to the Mediator complex subunit 7 family. In terms of assembly, component of the Mediator complex. Interacts with MED21.

The protein resides in the nucleus. Component of the Mediator complex, a coactivator involved in the regulated transcription of nearly all RNA polymerase II-dependent genes. Mediator functions as a bridge to convey information from gene-specific regulatory proteins to the basal RNA polymerase II transcription machinery. Mediator is recruited to promoters by direct interactions with regulatory proteins and serves as a scaffold for the assembly of a functional preinitiation complex with RNA polymerase II and the general transcription factors. Required for activated transcription of the MtnA, MtnB and MtnD genes. This is Mediator of RNA polymerase II transcription subunit 7 (MED7) from Drosophila melanogaster (Fruit fly).